The primary structure comprises 184 residues: Ras-related protein Rap1 (184 aa).

Residue 10–17 participates in GTP binding; the sequence is GSGGVGKS. Positions 32-40 match the Effector region motif; that stretch reads YDPTIEDSY. GTP-binding positions include 57 to 61 and 116 to 119; these read DTAGT and NKCD. Position 181 is a cysteine methyl ester (Cys181). Residue Cys181 is the site of S-geranylgeranyl cysteine attachment. Residues 182–184 constitute a propeptide, removed in mature form; that stretch reads VLL.

The protein belongs to the small GTPase superfamily. Ras family.

The protein localises to the cell membrane. The catalysed reaction is GTP + H2O = GDP + phosphate + H(+). Alternates between an inactive form bound to GDP and an active form bound to GTP. Activated by a guanine nucleotide-exchange factor (GEF) and inactivated by a GTPase-activating protein (GAP). Its function is as follows. Ras proteins bind GDP/GTP and possess intrinsic GTPase activity. Plays a role in photoreceptor cell determination. The chain is Ras-related protein Rap1 from Drosophila melanogaster (Fruit fly).